A 421-amino-acid chain; its full sequence is 3-phosphoshikimate 1-carboxyvinyltransferase (421 aa).

Positions 20, 21, and 25 each coordinate 3-phosphoshikimate. Phosphoenolpyruvate is bound at residue Lys-20. 2 residues coordinate phosphoenolpyruvate: Gly-90 and Arg-117. Residues Ser-162, Ser-163, Gln-164, Ser-190, Asp-304, and Lys-331 each coordinate 3-phosphoshikimate. Position 164 (Gln-164) interacts with phosphoenolpyruvate. Asp-304 serves as the catalytic Proton acceptor. Arg-335 and Arg-376 together coordinate phosphoenolpyruvate.

Belongs to the EPSP synthase family. As to quaternary structure, monomer.

The protein localises to the cytoplasm. It catalyses the reaction 3-phosphoshikimate + phosphoenolpyruvate = 5-O-(1-carboxyvinyl)-3-phosphoshikimate + phosphate. It participates in metabolic intermediate biosynthesis; chorismate biosynthesis. Its function is as follows. Catalyzes the transfer of the enolpyruvyl moiety of phosphoenolpyruvate (PEP) to the 5-hydroxyl of shikimate-3-phosphate (S3P) to produce enolpyruvyl shikimate-3-phosphate and inorganic phosphate. This chain is 3-phosphoshikimate 1-carboxyvinyltransferase, found in Methanothrix thermoacetophila (strain DSM 6194 / JCM 14653 / NBRC 101360 / PT) (Methanosaeta thermophila).